A 315-amino-acid chain; its full sequence is Large ribosomal subunit protein uL10 (315 aa).

Low complexity predominate over residues A285 to P294. Positions A285 to D315 are disordered. Acidic residues predominate over residues E300–M309.

This sequence belongs to the universal ribosomal protein uL10 family. In terms of assembly, P0 forms a pentameric complex by interaction with dimers of P1 and P2. Phosphorylated.

In terms of biological role, ribosomal protein P0 is the functional equivalent of E.coli protein L10. In Lithobates sylvaticus (Wood frog), this protein is Large ribosomal subunit protein uL10 (RPLP0).